Here is an 856-residue protein sequence, read N- to C-terminus: Leucine--tRNA ligase (856 aa).

Positions 53–63 (PYPSGNLHMGH) match the 'HIGH' region motif. A 'KMSKS' region motif is present at residues 622 to 626 (KMSKS). ATP is bound at residue K625.

This sequence belongs to the class-I aminoacyl-tRNA synthetase family.

The protein resides in the cytoplasm. It catalyses the reaction tRNA(Leu) + L-leucine + ATP = L-leucyl-tRNA(Leu) + AMP + diphosphate. The protein is Leucine--tRNA ligase of Prochlorococcus marinus (strain MIT 9215).